A 278-amino-acid polypeptide reads, in one-letter code: Bifunctional protein FolD (278 aa).

NADP(+)-binding positions include 163–165, Ser-188, and Val-229; that span reads GRS.

It belongs to the tetrahydrofolate dehydrogenase/cyclohydrolase family. In terms of assembly, homodimer.

It carries out the reaction (6R)-5,10-methylene-5,6,7,8-tetrahydrofolate + NADP(+) = (6R)-5,10-methenyltetrahydrofolate + NADPH. It catalyses the reaction (6R)-5,10-methenyltetrahydrofolate + H2O = (6R)-10-formyltetrahydrofolate + H(+). The protein operates within one-carbon metabolism; tetrahydrofolate interconversion. Its function is as follows. Catalyzes the oxidation of 5,10-methylenetetrahydrofolate to 5,10-methenyltetrahydrofolate and then the hydrolysis of 5,10-methenyltetrahydrofolate to 10-formyltetrahydrofolate. This chain is Bifunctional protein FolD, found in Exiguobacterium sp. (strain ATCC BAA-1283 / AT1b).